The sequence spans 113 residues: Hydrogenase maturation factor HypA (113 aa).

H2 is a Ni(2+) binding site. C73, C76, C89, and C92 together coordinate Zn(2+).

Belongs to the HypA/HybF family.

Functionally, involved in the maturation of [NiFe] hydrogenases. Required for nickel insertion into the metal center of the hydrogenase. This chain is Hydrogenase maturation factor HypA, found in Chlorobium phaeobacteroides (strain BS1).